Here is a 94-residue protein sequence, read N- to C-terminus: Integration host factor subunit beta (94 aa).

It belongs to the bacterial histone-like protein family. In terms of assembly, heterodimer of an alpha and a beta chain.

Its function is as follows. This protein is one of the two subunits of integration host factor, a specific DNA-binding protein that functions in genetic recombination as well as in transcriptional and translational control. The chain is Integration host factor subunit beta from Ruegeria pomeroyi (strain ATCC 700808 / DSM 15171 / DSS-3) (Silicibacter pomeroyi).